The following is a 1410-amino-acid chain: DNA-directed RNA polymerase subunit beta' (1410 aa).

Residues Cys-70, Cys-72, Cys-85, and Cys-88 each coordinate Zn(2+). Mg(2+) is bound by residues Asp-460, Asp-462, and Asp-464. Positions 814, 888, 895, and 898 each coordinate Zn(2+).

This sequence belongs to the RNA polymerase beta' chain family. As to quaternary structure, the RNAP catalytic core consists of 2 alpha, 1 beta, 1 beta' and 1 omega subunit. When a sigma factor is associated with the core the holoenzyme is formed, which can initiate transcription. It depends on Mg(2+) as a cofactor. Zn(2+) is required as a cofactor.

It carries out the reaction RNA(n) + a ribonucleoside 5'-triphosphate = RNA(n+1) + diphosphate. In terms of biological role, DNA-dependent RNA polymerase catalyzes the transcription of DNA into RNA using the four ribonucleoside triphosphates as substrates. This is DNA-directed RNA polymerase subunit beta' from Saccharophagus degradans (strain 2-40 / ATCC 43961 / DSM 17024).